The chain runs to 119 residues: DNA-binding protein MmarC7_1157 (119 aa).

Residues 1-12 (MNPEEIRQRRLQ) are compositionally biased toward basic and acidic residues. Positions 1–37 (MNPEEIRQRRLQEMQAKAQEQGAANDPEAQRQAQEQQ) are disordered.

This sequence belongs to the PDCD5 family.

In Methanococcus maripaludis (strain C7 / ATCC BAA-1331), this protein is DNA-binding protein MmarC7_1157.